A 203-amino-acid polypeptide reads, in one-letter code: MRSPVQLQHGSDATNGFHTLQPHDQTDGPIKRVCLTRGMHVPEHVAMHHTHDVGPDQCCSSVVQMIHAPPESVWALVRRFDNPKVYKNFIRQCRIVQGDGLHVGDLREVMVVSGLPAVSSTERLEILDEERHVISFSVVGGDHRLKNYRSVTTLHASDDEGTVVVESYIVDVPPGNTEEETLSFVDTIVRCNLQSLARSTNRQ.

A compositionally biased stretch (polar residues) spans 1–18 (MRSPVQLQHGSDATNGFH). The interval 1–29 (MRSPVQLQHGSDATNGFHTLQPHDQTDGP) is disordered. Residues 51–201 (HDVGPDQCCS…NLQSLARSTN (151 aa)) are START-like. Residues Lys87, 117-122 (AVSSTE), 144-150 (RLKNYRS), and Glu166 contribute to the abscisate site. A Gate loop motif is present at residues 113-117 (SGLPA). The short motif at 143 to 145 (HRL) is the Latch loop element.

The protein belongs to the PYR/PYL/RCAR abscisic acid intracellular receptor family. In terms of assembly, monomer. Homodimer. Binds ABA on one subunit only. Binds to CARs protein in an ABA-independent manner, both at the plasma membrane and in the nucleus. Binds both (-)-ABA and (+)-ABA. Interacts with HAB1, ABI1 and ABI2, and possibly with other PP2Cs.

Its subcellular location is the cytoplasm. The protein resides in the nucleus. It localises to the cell membrane. Functionally, receptor for abscisic acid (ABA) required for ABA-mediated responses such as stomatal closure and germination inhibition. Inhibits the activity of group-A protein phosphatases type 2C (PP2Cs) in an ABA-independent manner but more efficiently when activated by ABA. Confers enhanced sensitivity to ABA. Can be activated by both (-)-ABA and (+)-ABA. The polypeptide is Abscisic acid receptor PYL5 (PYL5) (Arabidopsis thaliana (Mouse-ear cress)).